Reading from the N-terminus, the 240-residue chain is UDP-2,3-diacylglucosamine hydrolase (240 aa).

Residues Asp8, His10, Asp41, Asn79, and His114 each coordinate Mn(2+). 79–80 is a substrate binding site; the sequence is NR. Substrate is bound by residues Asp122, Ser160, Asn164, Lys167, and His195. 2 residues coordinate Mn(2+): His195 and His197.

The protein belongs to the LpxH family. Mn(2+) serves as cofactor.

It is found in the cell inner membrane. It localises to the cytoplasm. The catalysed reaction is UDP-2-N,3-O-bis[(3R)-3-hydroxytetradecanoyl]-alpha-D-glucosamine + H2O = 2-N,3-O-bis[(3R)-3-hydroxytetradecanoyl]-alpha-D-glucosaminyl 1-phosphate + UMP + 2 H(+). It functions in the pathway glycolipid biosynthesis; lipid IV(A) biosynthesis; lipid IV(A) from (3R)-3-hydroxytetradecanoyl-[acyl-carrier-protein] and UDP-N-acetyl-alpha-D-glucosamine: step 4/6. With respect to regulation, inhibited by a sulfonyl piperazine compound that shows antibacterial activity against E.coli; LpxH is the cellular target of this compound. Inhibited by 0.01% (or more) Triton X-100 in vitro. Hydrolyzes the pyrophosphate bond of UDP-2,3-diacylglucosamine to yield 2,3-diacylglucosamine 1-phosphate (lipid X) and UMP by catalyzing the attack of water at the alpha-P atom. Involved in the biosynthesis of lipid A, a phosphorylated glycolipid that anchors the lipopolysaccharide to the outer membrane of the cell. Is essential for E.coli growth. Does not cleave the unacylated UDP-GlcNAc, the mono-acylated UDP-3-O-(R)-3-hydroxymyristoyl-GlcNAc, and CDP-diacylglycerol. In Escherichia coli (strain K12), this protein is UDP-2,3-diacylglucosamine hydrolase.